A 186-amino-acid polypeptide reads, in one-letter code: Bifunctional protein PyrR (186 aa).

The PRPP-binding signature appears at 101–113 (VVLVDDVLYTGRT).

This sequence belongs to the purine/pyrimidine phosphoribosyltransferase family. PyrR subfamily.

It carries out the reaction UMP + diphosphate = 5-phospho-alpha-D-ribose 1-diphosphate + uracil. Functionally, regulates the transcription of the pyrimidine nucleotide (pyr) operon in response to exogenous pyrimidines. In terms of biological role, also displays a weak uracil phosphoribosyltransferase activity which is not physiologically significant. In Syntrophobacter fumaroxidans (strain DSM 10017 / MPOB), this protein is Bifunctional protein PyrR.